The primary structure comprises 169 residues: Disulfide bond formation protein B (169 aa).

Residues 1–13 (MQALNHFSRIRLS) lie on the Cytoplasmic side of the membrane. Residues 14-30 (WFLLLLCIIFFEASALT) form a helical membrane-spanning segment. The Periplasmic segment spans residues 31–48 (FQHIMKLPPCVMCIYERV). Cysteine 40 and cysteine 43 are joined by a disulfide. The chain crosses the membrane as a helical span at residues 49 to 64 (AMMGIGGAAIIGLLNP). The Cytoplasmic portion of the chain corresponds to 65 to 71 (NNLIIRW). The chain crosses the membrane as a helical span at residues 72 to 89 (CGFIAWGISAGWGLKLAL). The Periplasmic segment spans residues 90-144 (EHVDFQLNPSPFSTCDLFVTFPSWAPLNKWAPWMFEAYGDCSKIVWQFLTLTMPQ). The cysteines at positions 104 and 130 are disulfide-linked. The chain crosses the membrane as a helical span at residues 145–163 (WLVIIFAGNLIALAIFVIA). Over 164–169 (QFFNKK) the chain is Cytoplasmic.

Belongs to the DsbB family.

The protein resides in the cell inner membrane. In terms of biological role, required for disulfide bond formation in some periplasmic proteins. Acts by oxidizing the DsbA protein. The sequence is that of Disulfide bond formation protein B from Aliivibrio fischeri (strain ATCC 700601 / ES114) (Vibrio fischeri).